A 356-amino-acid polypeptide reads, in one-letter code: DNA polymerase IV (356 aa).

Residues 7 to 188 (IIHIDMDCFY…LPLKKISGVG (182 aa)) enclose the UmuC domain. The Mg(2+) site is built by Asp-11 and Asp-106. Residue Glu-107 is part of the active site.

Belongs to the DNA polymerase type-Y family. In terms of assembly, monomer. It depends on Mg(2+) as a cofactor.

It localises to the cytoplasm. The enzyme catalyses DNA(n) + a 2'-deoxyribonucleoside 5'-triphosphate = DNA(n+1) + diphosphate. Functionally, poorly processive, error-prone DNA polymerase involved in untargeted mutagenesis. Copies undamaged DNA at stalled replication forks, which arise in vivo from mismatched or misaligned primer ends. These misaligned primers can be extended by PolIV. Exhibits no 3'-5' exonuclease (proofreading) activity. May be involved in translesional synthesis, in conjunction with the beta clamp from PolIII. The polypeptide is DNA polymerase IV (Glaesserella parasuis serovar 5 (strain SH0165) (Haemophilus parasuis)).